The following is a 224-amino-acid chain: Mammalian ependymin-related protein 1 (224 aa).

Positions 1 to 37 (MPARAPRRLVQGPRGTWLLGSLWVWVLCGLGMAGSLG) are cleaved as a signal peptide. 3 cysteine pairs are disulfide-bonded: Cys-42–Cys-172, Cys-88–Cys-222, and Cys-113–Cys-210. Residues Asn-130 and Asn-182 are each glycosylated (N-linked (GlcNAc...) asparagine).

This sequence belongs to the ependymin family. In terms of assembly, homodimer. Post-translationally, N-glycosylated; the glycan contains mannose-6-phosphate moieties. In terms of tissue distribution, detected in brain, small intestine and in soleus, extensor digitorum longus and white gastrocnemius (at protein level). Detected in brain and skeletal muscle, and at lower leavels in heart.

It localises to the lysosome lumen. The protein localises to the secreted. In terms of biological role, binds anionic lipids and gangliosides at acidic pH. The chain is Mammalian ependymin-related protein 1 (Epdr1) from Mus musculus (Mouse).